The following is a 104-amino-acid chain: Large ribosomal subunit protein uL24 (104 aa).

This sequence belongs to the universal ribosomal protein uL24 family. As to quaternary structure, part of the 50S ribosomal subunit.

Functionally, one of two assembly initiator proteins, it binds directly to the 5'-end of the 23S rRNA, where it nucleates assembly of the 50S subunit. One of the proteins that surrounds the polypeptide exit tunnel on the outside of the subunit. This is Large ribosomal subunit protein uL24 from Photobacterium profundum (strain SS9).